A 231-amino-acid polypeptide reads, in one-letter code: Transcriptional regulatory protein KdpE (231 aa).

The region spanning 4–117 (KILIIEDDHA…ELRARIRVIE (114 aa)) is the Response regulatory domain. Asp53 carries the 4-aspartylphosphate modification. Positions 127 to 227 (NIVFTNGLLS…HPRIGYQMLQ (101 aa)) form a DNA-binding region, ompR/PhoB-type.

Post-translationally, phosphorylated by KdpD. Phosphorylation is required for transcriptional activity.

Member of the two-component regulatory system KdpD/KdpE that regulates the transcription of a series of virulence factors through sensing external K(+) concentrations. Also regulates capsular polysaccharide synthesis. Upon phosphorylation by KpdD, functions as a transcriptional regulator by direct binding to promoter regions of target genes including spa, hla, aur and geh. Represses the transcription of kdpFABC operon. This chain is Transcriptional regulatory protein KdpE, found in Staphylococcus aureus (strain NCTC 8325 / PS 47).